Consider the following 644-residue polypeptide: Exoribonuclease 2 (644 aa).

The RNB domain occupies 189–516 (RQDLTALNFV…NHRLLKAVIK (328 aa)). Positions 561 to 643 (DTRFAAEIID…DTRSIIARPA (83 aa)) constitute an S1 motif domain.

This sequence belongs to the RNR ribonuclease family. RNase II subfamily.

The protein localises to the cytoplasm. It carries out the reaction Exonucleolytic cleavage in the 3'- to 5'-direction to yield nucleoside 5'-phosphates.. Involved in mRNA degradation. Hydrolyzes single-stranded polyribonucleotides processively in the 3' to 5' direction. This chain is Exoribonuclease 2, found in Salmonella arizonae (strain ATCC BAA-731 / CDC346-86 / RSK2980).